Reading from the N-terminus, the 397-residue chain is Plasma membrane iron permease (397 aa).

4 consecutive transmembrane segments (helical) span residues 61-81, 92-112, 177-197, and 292-312; these read FTAL…FYAL, IWEG…GFAM, AFPL…YFIY, and GSIL…FLMW. 2 positions are modified to phosphoserine: serine 337 and serine 338. Positions 337 to 346 are enriched in polar residues; it reads SSHTPVQSSS. Residues 337 to 364 form a disordered region; the sequence is SSHTPVQSSSSEDEFKINSPTDDKGDKA. Phosphothreonine is present on threonine 340. Serine 346, serine 347, and serine 355 each carry phosphoserine. Residues 349–364 show a composition bias toward basic and acidic residues; it reads DEFKINSPTDDKGDKA. At threonine 357 the chain carries Phosphothreonine. 3 positions are modified to phosphoserine: serine 374, serine 375, and serine 376.

The protein belongs to the oxidase-dependent Fe transporter (OFeT) (TC 9.A.10.1) family.

The protein resides in the membrane. Functionally, permease for high affinity iron uptake. The sequence is that of Plasma membrane iron permease (fip1) from Schizosaccharomyces pombe (strain 972 / ATCC 24843) (Fission yeast).